We begin with the raw amino-acid sequence, 263 residues long: S-methyl-5'-thioadenosine phosphorylase (263 aa).

Residues T13, 55–56 (RH), and 88–89 (SA) contribute to the phosphate site. Residue M186 coordinates substrate. Phosphate is bound at residue T187. Position 210 to 212 (210 to 212 (DYD)) interacts with substrate.

This sequence belongs to the PNP/MTAP phosphorylase family. MTAP subfamily. Homohexamer. Dimer of a homotrimer.

It catalyses the reaction S-methyl-5'-thioadenosine + phosphate = 5-(methylsulfanyl)-alpha-D-ribose 1-phosphate + adenine. The protein operates within amino-acid biosynthesis; L-methionine biosynthesis via salvage pathway; S-methyl-5-thio-alpha-D-ribose 1-phosphate from S-methyl-5'-thioadenosine (phosphorylase route): step 1/1. Functionally, catalyzes the reversible phosphorylation of S-methyl-5'-thioadenosine (MTA) to adenine and 5-methylthioribose-1-phosphate. Involved in the breakdown of MTA, a major by-product of polyamine biosynthesis. Responsible for the first step in the methionine salvage pathway after MTA has been generated from S-adenosylmethionine. Has broad substrate specificity with 6-aminopurine nucleosides as preferred substrates. The sequence is that of S-methyl-5'-thioadenosine phosphorylase from Nitrosopumilus maritimus (strain SCM1).